We begin with the raw amino-acid sequence, 717 residues long: Polyribonucleotide nucleotidyltransferase (717 aa).

Residues Asp-487 and Asp-493 each coordinate Mg(2+). The KH domain occupies 554 to 613 (PRITVINVPKDKIRDVIGTGGKVIREIVEYSGCKIDIEDDGTIKIAATSDEQAQKAIDRI). The S1 motif domain occupies 623 to 691 (GQIYTGKVVK…DRGKVKLSMR (69 aa)).

It belongs to the polyribonucleotide nucleotidyltransferase family. It depends on Mg(2+) as a cofactor.

It is found in the cytoplasm. It carries out the reaction RNA(n+1) + phosphate = RNA(n) + a ribonucleoside 5'-diphosphate. Functionally, involved in mRNA degradation. Catalyzes the phosphorolysis of single-stranded polyribonucleotides processively in the 3'- to 5'-direction. This Acidiphilium cryptum (strain JF-5) protein is Polyribonucleotide nucleotidyltransferase.